A 323-amino-acid chain; its full sequence is Beta-ketoacyl-[acyl-carrier-protein] synthase III (323 aa).

Residues Cys-114 and His-250 contribute to the active site. An ACP-binding region spans residues 251–255; that stretch reads QANLR. The active site involves Asn-280.

Belongs to the thiolase-like superfamily. FabH family. As to quaternary structure, homodimer.

The protein resides in the cytoplasm. It carries out the reaction malonyl-[ACP] + acetyl-CoA + H(+) = 3-oxobutanoyl-[ACP] + CO2 + CoA. Its pathway is lipid metabolism; fatty acid biosynthesis. Functionally, catalyzes the condensation reaction of fatty acid synthesis by the addition to an acyl acceptor of two carbons from malonyl-ACP. Catalyzes the first condensation reaction which initiates fatty acid synthesis and may therefore play a role in governing the total rate of fatty acid production. Possesses both acetoacetyl-ACP synthase and acetyl transacylase activities. Its substrate specificity determines the biosynthesis of branched-chain and/or straight-chain of fatty acids. The polypeptide is Beta-ketoacyl-[acyl-carrier-protein] synthase III (Cereibacter sphaeroides (strain ATCC 17029 / ATH 2.4.9) (Rhodobacter sphaeroides)).